The chain runs to 208 residues: Thymidylate kinase (208 aa).

10–17 (GPDGSGKT) serves as a coordination point for ATP.

Belongs to the thymidylate kinase family.

The enzyme catalyses dTMP + ATP = dTDP + ADP. Phosphorylation of dTMP to form dTDP in both de novo and salvage pathways of dTTP synthesis. The chain is Thymidylate kinase from Listeria monocytogenes serotype 4b (strain CLIP80459).